Reading from the N-terminus, the 367-residue chain is uncharacterized protein (367 aa).

Belongs to the Gfo/Idh/MocA family.

This is an uncharacterized protein from Streptococcus pneumoniae serotype 4 (strain ATCC BAA-334 / TIGR4).